The primary structure comprises 173 residues: Nuclear transcription factor Y subunit B-8 (173 aa).

The tract at residues 1 to 30 (MAESQAKSPGGCGSHESGGDQSPRSLHVRE) is disordered. Residue A2 is modified to N-acetylalanine. A DNA-binding region spans residues 35-41 (LPIANIS). The tract at residues 62–73 (VQECVSEFISFV) is subunit association domain (SAD). Residues 123 to 173 (DTKGSAKGGDPNAKKDGQSSQNGQFSQLAHQGPYGNSQAQQHMMVPMPGTD) are disordered. Residues 140–163 (QSSQNGQFSQLAHQGPYGNSQAQQ) show a composition bias toward polar residues.

This sequence belongs to the NFYB/HAP3 subunit family. As to quaternary structure, heterotrimeric transcription factor composed of three components, NF-YA, NF-YB and NF-YC. NF-YB and NF-YC must interact and dimerize for NF-YA association and DNA binding. Expressed in flowers and mature rosettes.

The protein localises to the nucleus. In terms of biological role, component of the NF-Y/HAP transcription factor complex. The NF-Y complex stimulates the transcription of various genes by recognizing and binding to a CCAAT motif in promoters. The sequence is that of Nuclear transcription factor Y subunit B-8 (NFYB8) from Arabidopsis thaliana (Mouse-ear cress).